Reading from the N-terminus, the 94-residue chain is uncharacterized protein (94 aa).

Could be a silencing control element for the regulation of the restriction system. This is an uncharacterized protein from Herpetosiphon aurantiacus (Herpetosiphon giganteus).